The sequence spans 27 residues: Secretin (27 aa).

At Met-27 the chain carries Methionine amide.

It belongs to the glucagon family.

The protein localises to the secreted. Its function is as follows. Hormone involved in different processes, such as regulation of the pH of the duodenal content, food intake and water homeostasis. Exerts its biological effects by binding to secretin receptor (SCTR), a G-protein coupled receptor expressed in the basolateral domain of several cells. In Gallus gallus (Chicken), this protein is Secretin.